A 285-amino-acid polypeptide reads, in one-letter code: CCR4-NOT transcription complex subunit 7 (285 aa).

Residues aspartate 40, glutamate 42, aspartate 161, aspartate 230, and glutamate 278 each contribute to the a divalent metal cation site.

The protein belongs to the CAF1 family. In terms of assembly, component of the CCR4-NOT complex; distinct complexes seem to exist that differ in the participation of probably mutually exclusive catalytic subunits; the complex contains two deadenylase subunits, CNOT6 or CNOT6L, and CNOT7 or CNOT8. In the complex, interacts directly with CNOT1. Interacts with AGO2. Interacts with TOB1; recruited by TOB1 to a ternary complex with CPEB3 which is required for mRNA deadenylation and decay. Interacts with BTG1. Interacts with BTG2. Interacts with NANOS2. Interacts with ZFP36, ZFP36L1 and ZFP36L2; these interactions are inhibited in response to phorbol 12-myristate 13-acetate (PMA) treatment in a p38 MAPK-dependent manner. Interacts with BTG4. Interacts with EIF4E; this interaction is increased by CNOT7 interaction with BTG4. Requires Mn(2+) as cofactor. Mg(2+) serves as cofactor. Co(2+) is required as a cofactor.

The protein resides in the nucleus. Its subcellular location is the cytoplasm. It is found in the P-body. The protein localises to the cytoplasmic ribonucleoprotein granule. The enzyme catalyses Exonucleolytic cleavage of poly(A) to 5'-AMP.. In terms of biological role, has 3'-5' poly(A) exoribonuclease activity for synthetic poly(A) RNA substrate. Its function seems to be partially redundant with that of CNOT8. Catalytic component of the CCR4-NOT complex which is one of the major cellular mRNA deadenylases and is linked to various cellular processes including bulk mRNA degradation, miRNA-mediated repression, translational repression during translational initiation and general transcription regulation. During miRNA-mediated repression the complex also seems to act as translational repressor during translational initiation. Additional complex functions may be a consequence of its influence on mRNA expression. Required for miRNA-mediated mRNA deadenylation. Associates with members of the BTG family such as TOB1 and BTG2 and is required for their anti-proliferative activity. The protein is CCR4-NOT transcription complex subunit 7 (CNOT7) of Bos taurus (Bovine).